The chain runs to 173 residues: Disulfide bond formation protein B 2 (173 aa).

At 1–9 (MSLAGSRLL) the chain is on the cytoplasmic side. A helical transmembrane segment spans residues 10–26 (FSLVFLVGALASWAAFN). The Periplasmic portion of the chain corresponds to 27-44 (LQTGGGLESCSLWSVQRL). The helical transmembrane segment at 45 to 61 (LLLALGGVNLLAVIQGP) threads the bilayer. The Cytoplasmic portion of the chain corresponds to 62 to 67 (GRVGRA). Residues 68 to 85 (VYWGLNLLLGLLGVVTAG) form a helical membrane-spanning segment. Over 86-142 (RHVLLQNIPSEQLLACLPDMSFMLRQLSWWQALKLTFMGTSDCAEVTWTLLDMSLPE) the chain is Periplasmic. Cys101 and Cys128 are disulfide-bonded. A helical transmembrane segment spans residues 143 to 161 (WSLLFFVIMLIFSGYRLWR). The Cytoplasmic portion of the chain corresponds to 162-173 (QLRGARKAVALP).

Belongs to the DsbB family.

The protein resides in the cell inner membrane. Its function is as follows. Required for disulfide bond formation in some periplasmic proteins. Acts by oxidizing the DsbA protein. This is Disulfide bond formation protein B 2 from Pseudomonas fluorescens (strain ATCC BAA-477 / NRRL B-23932 / Pf-5).